We begin with the raw amino-acid sequence, 391 residues long: Phosphoglycerate kinase (391 aa).

Residues 21–23, Arg36, 59–62, Arg113, and Arg146 each bind substrate; these read DLN and HLGR. Residues Lys197, Glu319, and 345–348 contribute to the ATP site; that span reads GGDT.

It belongs to the phosphoglycerate kinase family. Monomer.

It is found in the cytoplasm. It catalyses the reaction (2R)-3-phosphoglycerate + ATP = (2R)-3-phospho-glyceroyl phosphate + ADP. It functions in the pathway carbohydrate degradation; glycolysis; pyruvate from D-glyceraldehyde 3-phosphate: step 2/5. The protein is Phosphoglycerate kinase of Shewanella baltica (strain OS185).